The primary structure comprises 255 residues: Ditrans,polycis-undecaprenyl-diphosphate synthase ((2E,6E)-farnesyl-diphosphate specific) (255 aa).

The active site involves Asp21. Asp21 is a binding site for Mg(2+). Substrate contacts are provided by residues Gly22–Arg25, Trp26, Arg34, His38, and Ser66–Glu68. The active-site Proton acceptor is Asn69. Residues Trp70, Arg72, Arg189, and Arg195–Ser197 each bind substrate. Glu208 lines the Mg(2+) pocket.

Belongs to the UPP synthase family. Homodimer. Requires Mg(2+) as cofactor.

It carries out the reaction 8 isopentenyl diphosphate + (2E,6E)-farnesyl diphosphate = di-trans,octa-cis-undecaprenyl diphosphate + 8 diphosphate. Catalyzes the sequential condensation of isopentenyl diphosphate (IPP) with (2E,6E)-farnesyl diphosphate (E,E-FPP) to yield (2Z,6Z,10Z,14Z,18Z,22Z,26Z,30Z,34E,38E)-undecaprenyl diphosphate (di-trans,octa-cis-UPP). UPP is the precursor of glycosyl carrier lipid in the biosynthesis of bacterial cell wall polysaccharide components such as peptidoglycan and lipopolysaccharide. The protein is Ditrans,polycis-undecaprenyl-diphosphate synthase ((2E,6E)-farnesyl-diphosphate specific) of Xylella fastidiosa (strain Temecula1 / ATCC 700964).